A 1273-amino-acid polypeptide reads, in one-letter code: Lysine-specific histone demethylase 2 (1273 aa).

Positions 199 to 230 (ENFFDANSPSSQQFPSTYPSRSQNPLSSSGDG) are enriched in polar residues. A disordered region spans residues 199–237 (ENFFDANSPSSQQFPSTYPSRSQNPLSSSGDGSTAIHAG). Residues 247–307 (FSNYPYPLDA…LSKSVDNAVL (61 aa)) are a coiled coil. The SWIRM domain maps to 394-490 (AAEAARKCNL…YGCLSFDSSF (97 aa)). FAD is bound by residues 509–551 (IAVV…ILEA), Thr-517, Glu-550, Arg-558, and 572–573 (TQ). Residues 542–1198 (LPPKVIILEA…GKILRYQRLT (657 aa)) form a demethylase activity region. The interval 571 to 596 (ATQINHHTSNSNSISSNSTSLNPKDV) is disordered. Residues 574 to 590 (INHHTSNSNSISSNSTS) show a composition bias toward low complexity. Residues 681 to 767 (SVRISWISQF…NTVDTDFSKD (87 aa)) adopt a coiled-coil conformation. A DNA-binding region (HMG box) is located at residues 1115–1195 (SKPNANPFLL…AYAGKILRYQ (81 aa)). FAD-binding positions include Asp-1147 and 1156 to 1157 (ET). Positions 1215 to 1273 (KCQDEPIPDDEARLFMQAQREEEQRKQTQDDNISKSREASDEEYHDDGSSDSGYNGTRY) are disordered. The segment covering 1233 to 1253 (QREEEQRKQTQDDNISKSREA) has biased composition (basic and acidic residues). Over residues 1264–1273 (SDSGYNGTRY) the composition is skewed to polar residues.

This sequence belongs to the flavin monoamine oxidase family. As to quaternary structure, component of the SWM histone demethylase complex composed of at least lsd1, lsd2, phf1 and phf2. Interacts directly with lsd1. FAD serves as cofactor.

It localises to the nucleus. Its function is as follows. Catalytic component of the SWM histone demethylase complex that specifically demethylates H3K9me2, a specific tag for epigenetic transcriptional activation, thereby acting as a corepressor. Acts by oxidizing the substrate by FAD to generate the corresponding imine that is subsequently hydrolyzed. Has a role in regulating heterochromatin propagation and euchromatic transcription. Also has a gene activating role. The chain is Lysine-specific histone demethylase 2 (lsd2) from Schizosaccharomyces pombe (strain 972 / ATCC 24843) (Fission yeast).